We begin with the raw amino-acid sequence, 103 residues long: Methanol dehydrogenase [cytochrome c] subunit 2 (103 aa).

The N-terminal stretch at 1-20 (MKRILTLTVAALALGTPALA) is a signal peptide. An intrachain disulfide couples Cys26 to Cys32.

It belongs to the methanol dehydrogenase subunit 2 family. As to quaternary structure, heterotetramer composed of 2 alpha and 2 beta subunits.

The protein resides in the periplasm. The enzyme catalyses 2 Fe(III)-[cytochrome cL] + a primary alcohol = 2 Fe(II)-[cytochrome cL] + an aldehyde + 2 H(+). In terms of biological role, catalyzes the oxidation of primary alcohols including methanol. The chain is Methanol dehydrogenase [cytochrome c] subunit 2 (moxI) from Paracoccus denitrificans.